A 383-amino-acid chain; its full sequence is Putative glutamate--cysteine ligase 2-2 (383 aa).

The segment at 35–56 is disordered; the sequence is RGDRDGAGGPPGGADPDGDLDG.

This sequence belongs to the glutamate--cysteine ligase type 2 family. YbdK subfamily.

It carries out the reaction L-cysteine + L-glutamate + ATP = gamma-L-glutamyl-L-cysteine + ADP + phosphate + H(+). Its function is as follows. ATP-dependent carboxylate-amine ligase which exhibits weak glutamate--cysteine ligase activity. This Frankia alni (strain DSM 45986 / CECT 9034 / ACN14a) protein is Putative glutamate--cysteine ligase 2-2.